Here is a 210-residue protein sequence, read N- to C-terminus: Probable membrane protein MT1774 (210 aa).

Transmembrane regions (helical) follow at residues 43–63 and 165–185; these read AVVM…AAAA and ALAA…LLAL.

The protein resides in the cell membrane. The chain is Probable membrane protein MT1774 from Mycobacterium tuberculosis (strain CDC 1551 / Oshkosh).